A 372-amino-acid polypeptide reads, in one-letter code: Putative glutamate--cysteine ligase 2 (372 aa).

It belongs to the glutamate--cysteine ligase type 2 family. YbdK subfamily.

It carries out the reaction L-cysteine + L-glutamate + ATP = gamma-L-glutamyl-L-cysteine + ADP + phosphate + H(+). In terms of biological role, ATP-dependent carboxylate-amine ligase which exhibits weak glutamate--cysteine ligase activity. The protein is Putative glutamate--cysteine ligase 2 of Gloeobacter violaceus (strain ATCC 29082 / PCC 7421).